Consider the following 501-residue polypeptide: MLO-like protein 5 (501 aa).

Topologically, residues 1-22 (MAGGGGGSTSGEGPRELDQTPT) are extracellular. The chain crosses the membrane as a helical span at residues 23–43 (WAVSTVCGVIILISIVLELMI). The Cytoplasmic portion of the chain corresponds to 44-68 (HKIGEVFTERRKKALYEALQKIKNE). The helical transmembrane segment at 69-89 (LMVLGFISLLLTFGQNYIASL) threads the bilayer. At 90-151 (CVASRYGHAM…ISLNALHQVH (62 aa)) the chain is on the extracellular side. The helical transmembrane segment at 152–172 (IFIFFLAVFHVIYSAITMMLG) threads the bilayer. The Cytoplasmic segment spans residues 173–273 (RAKIRGWKVW…IKRSLEDDFK (101 aa)). A helical transmembrane segment spans residues 274-294 (VVVGISPELWAFVMLFLLFDV). H295 is a topological domain (extracellular). Residues 296–316 (GWYVTAVITMIPPLLTLAIGT) traverse the membrane as a helical segment. At 317–359 (KLQAIISDMALEIQERHAVIQGMPLVNVSDRHFWFSRPALVLH) the chain is on the cytoplasmic side. The helical transmembrane segment at 360–380 (IIHFILFQNAFEITYFFWIWY) threads the bilayer. Residues 381–391 (EFGLRSCFHHH) are Extracellular-facing. Residues 392–412 (FALIIIRVALGVGVQFLCSYI) traverse the membrane as a helical segment. Over 413-501 (TLPLYALVTQ…SQSRDLLSGP (89 aa)) the chain is Cytoplasmic. The tract at residues 443–501 (WHKNAKKKSETPGQTQPPLPNLRPKTGGDIESASPANITASVDVKESDQSQSRDLLSGP) is disordered. Residues 450-471 (KSETPGQTQPPLPNLRPKTGGD) form a calmodulin-binding region. Residues 491 to 501 (QSQSRDLLSGP) are compositionally biased toward polar residues.

This sequence belongs to the MLO family.

It localises to the membrane. May be involved in modulation of pathogen defense and leaf cell death. Activity seems to be regulated by Ca(2+)-dependent calmodulin binding and seems not to require heterotrimeric G proteins. This Arabidopsis thaliana (Mouse-ear cress) protein is MLO-like protein 5 (MLO5).